A 396-amino-acid chain; its full sequence is Mevalonate kinase (396 aa).

ATP is bound by residues K13, N55, S135, and 140 to 146 (GAGLGSS). S146 (proton donor) is an active-site residue. S146 and E193 together coordinate Mg(2+). Catalysis depends on D204, which acts as the Proton acceptor.

It belongs to the GHMP kinase family. Mevalonate kinase subfamily. As to quaternary structure, homodimer. Mg(2+) serves as cofactor.

It localises to the cytoplasm. Its subcellular location is the peroxisome. It catalyses the reaction (R)-mevalonate + ATP = (R)-5-phosphomevalonate + ADP + H(+). It functions in the pathway isoprenoid biosynthesis; isopentenyl diphosphate biosynthesis via mevalonate pathway; isopentenyl diphosphate from (R)-mevalonate: step 1/3. With respect to regulation, farnesyl pyrophosphate and geranyl pyrophosphate inhibit mevalonate kinase activity by binding competitively at the ATP-binding sites. In terms of biological role, catalyzes the phosphorylation of mevalonate to mevalonate 5-phosphate, a key step in isoprenoid and cholesterol biosynthesis. The protein is Mevalonate kinase of Homo sapiens (Human).